Consider the following 98-residue polypeptide: Small ribosomal subunit protein bS6 (98 aa).

The protein belongs to the bacterial ribosomal protein bS6 family.

Binds together with bS18 to 16S ribosomal RNA. This chain is Small ribosomal subunit protein bS6, found in Lacticaseibacillus paracasei (strain ATCC 334 / BCRC 17002 / CCUG 31169 / CIP 107868 / KCTC 3260 / NRRL B-441) (Lactobacillus paracasei).